The chain runs to 158 residues: Transcriptional regulator MraZ (158 aa).

SpoVT-AbrB domains are found at residues 5–52 (IYET…TFSS) and 91–134 (AVEC…SQAE).

This sequence belongs to the MraZ family. In terms of assembly, forms oligomers.

The protein localises to the cytoplasm. It is found in the nucleoid. This chain is Transcriptional regulator MraZ, found in Geobacter sulfurreducens (strain ATCC 51573 / DSM 12127 / PCA).